We begin with the raw amino-acid sequence, 63 residues long: Large ribosomal subunit protein uL29 (63 aa).

Belongs to the universal ribosomal protein uL29 family.

The polypeptide is Large ribosomal subunit protein uL29 (Edwardsiella ictaluri (strain 93-146)).